We begin with the raw amino-acid sequence, 283 residues long: Pantothenate synthetase (283 aa).

ATP is bound at residue 30–37 (MGALHEGH). His37 (proton donor) is an active-site residue. Gln61 provides a ligand contact to (R)-pantoate. Gln61 provides a ligand contact to beta-alanine. 150 to 153 (GRKD) is a binding site for ATP. Residue Gln156 participates in (R)-pantoate binding. ATP contacts are provided by residues Val179 and 187-190 (MSSR).

It belongs to the pantothenate synthetase family. Homodimer.

The protein localises to the cytoplasm. The enzyme catalyses (R)-pantoate + beta-alanine + ATP = (R)-pantothenate + AMP + diphosphate + H(+). It participates in cofactor biosynthesis; (R)-pantothenate biosynthesis; (R)-pantothenate from (R)-pantoate and beta-alanine: step 1/1. Functionally, catalyzes the condensation of pantoate with beta-alanine in an ATP-dependent reaction via a pantoyl-adenylate intermediate. This chain is Pantothenate synthetase, found in Rhodopirellula baltica (strain DSM 10527 / NCIMB 13988 / SH1).